The chain runs to 775 residues: K(+)-insensitive pyrophosphate-energized proton pump (775 aa).

A run of 5 helical transmembrane segments spans residues 9–29 (SLAV…AFFI), 65–85 (ISIL…IIPP), 108–128 (AVAF…GMNV), 160–180 (MLTV…FGIA), and 185–205 (LLGF…GGGI). Lys208 provides a ligand contact to substrate. Asp211, Asp215, and Asp241 together coordinate Mg(2+). 6 helical membrane-spanning segments follow: residues 259–279 (VTLV…VGTI), 288–308 (FIIF…IGNL), 327–347 (FYIA…VFMV), 359–379 (FFAT…TEYF), 413–433 (SVWA…IYAG), and 442–462 (AILY…GNTI). Residue Asp472 coordinates Mg(2+). 4 helical membrane-spanning segments follow: residues 508–528 (IAIG…FTDV), 555–575 (PVFI…ALTI), 622–642 (LISL…TLGV), and 644–664 (ALGG…VFQA). Ca(2+)-binding residues include Asp671, Asp697, and Asp701. Substrate is bound at residue Lys704. The next 2 helical transmembrane spans lie at 710 to 730 (ALNP…PIVV) and 735 to 755 (GSPG…WAIW).

It belongs to the H(+)-translocating pyrophosphatase (TC 3.A.10) family. K(+)-insensitive subfamily. In terms of assembly, homodimer. The cofactor is Mg(2+).

The protein localises to the cell membrane. It catalyses the reaction diphosphate + H2O + H(+)(in) = 2 phosphate + 2 H(+)(out). Functionally, proton pump that utilizes the energy of pyrophosphate hydrolysis as the driving force for proton movement across the membrane. Generates a proton motive force. In Chloroflexus aurantiacus (strain ATCC 29366 / DSM 635 / J-10-fl), this protein is K(+)-insensitive pyrophosphate-energized proton pump.